The sequence spans 199 residues: MAPKAVLVGLPGAGKSTIGRRLSKALGVSLLDTDAAIEKQTGRSIADIFAIDGEEEFRRIEEGVVRAALVEHDGVVSLGGGAVTSPGVCAALAGHIVIYLEINAEEAMRRACGSTVRPLLAGPDRAEKFQDLMARRVPLYRRVATIRVDTNCHNLGAVVRYIMARLQAQLATPVSGGDRKSSEAERSGAPLRKSSEVVK.

12 to 17 contributes to the ATP binding site; the sequence is GAGKST. Ser16 serves as a coordination point for Mg(2+). Residues Asp34, Arg58, and Gly80 each coordinate substrate. Arg117 is an ATP binding site. Residue Arg136 participates in substrate binding. The segment at 174–199 is disordered; that stretch reads VSGGDRKSSEAERSGAPLRKSSEVVK. Residues 177–186 are compositionally biased toward basic and acidic residues; it reads GDRKSSEAER.

The protein belongs to the shikimate kinase family. In terms of assembly, monomer. Requires Mg(2+) as cofactor.

The protein localises to the cytoplasm. It carries out the reaction shikimate + ATP = 3-phosphoshikimate + ADP + H(+). It participates in metabolic intermediate biosynthesis; chorismate biosynthesis; chorismate from D-erythrose 4-phosphate and phosphoenolpyruvate: step 5/7. In terms of biological role, catalyzes the specific phosphorylation of the 3-hydroxyl group of shikimic acid using ATP as a cosubstrate. The chain is Shikimate kinase from Mycobacterium leprae (strain TN).